Here is a 277-residue protein sequence, read N- to C-terminus: 2-dehydro-3-deoxyphosphooctonate aldolase (277 aa).

It belongs to the KdsA family.

The protein localises to the cytoplasm. It catalyses the reaction D-arabinose 5-phosphate + phosphoenolpyruvate + H2O = 3-deoxy-alpha-D-manno-2-octulosonate-8-phosphate + phosphate. It functions in the pathway carbohydrate biosynthesis; 3-deoxy-D-manno-octulosonate biosynthesis; 3-deoxy-D-manno-octulosonate from D-ribulose 5-phosphate: step 2/3. Its pathway is bacterial outer membrane biogenesis; lipopolysaccharide biosynthesis. The chain is 2-dehydro-3-deoxyphosphooctonate aldolase from Dichelobacter nodosus (strain VCS1703A).